Reading from the N-terminus, the 374-residue chain is Glutamate 5-kinase (374 aa).

Lys-16 contributes to the ATP binding site. Positions 56, 143, and 155 each coordinate substrate. 175–176 (TD) lines the ATP pocket. A PUA domain is found at 282–360 (RGRVVLDAGA…SEIEAVLGYV (79 aa)).

The protein belongs to the glutamate 5-kinase family.

The protein resides in the cytoplasm. It carries out the reaction L-glutamate + ATP = L-glutamyl 5-phosphate + ADP. The protein operates within amino-acid biosynthesis; L-proline biosynthesis; L-glutamate 5-semialdehyde from L-glutamate: step 1/2. Catalyzes the transfer of a phosphate group to glutamate to form L-glutamate 5-phosphate. The chain is Glutamate 5-kinase from Ralstonia nicotianae (strain ATCC BAA-1114 / GMI1000) (Ralstonia solanacearum).